Consider the following 216-residue polypeptide: uncharacterized protein (216 aa).

This is an uncharacterized protein from Caenorhabditis elegans.